The following is a 404-amino-acid chain: Deoxyguanosinetriphosphate triphosphohydrolase-like protein (404 aa).

A disordered region spans residues 1–33 (MSVGMAAPRAAFSCDPDRSRGRQFAEPPSSNRS). An HD domain is found at 69 to 217 (RLTHSLEVAQ…AALADDIAYD (149 aa)).

It belongs to the dGTPase family. Type 2 subfamily.

This Rhodopseudomonas palustris (strain HaA2) protein is Deoxyguanosinetriphosphate triphosphohydrolase-like protein.